A 295-amino-acid chain; its full sequence is Probable WRKY transcription factor 46 (295 aa).

A DNA-binding region (WRKY) is located at residues 98–166; it reads QENGSIDDGH…YLGNHTCNNI (69 aa).

The protein belongs to the WRKY group III family. As to quaternary structure, binds to BZR2/BES1 to cooperatively regulate the expression of target genes. Phosphorylated and destabilized by ASK7/BIN2. Expressed in guard cells, hypocotyls, and in the vascular tissues of cotyledon and root. Mostly expressed in roots, at lower levels in leaves and petioles, and, to a lower extent, in stems, flowers and siliques.

The protein localises to the nucleus. Transcription factor involved in the regulation of osmotic stress responses and stomatal movement. Interacts specifically with the W box (5'-(T)TGAC[CT]-3'), a frequently occurring elicitor-responsive cis-acting element. Positive regulator of EDS1-dependent defense against E.amylovora. Together with WRKY70 and WRKY53, promotes resistance to P.syringae, probably by enhancing salicylic acid (SA)- dependent genes. Contributes to the suppression of jasmonic acid (MeJA)-induced expression of PDF1.2. Together with WRKY54 and WRKY70, promotes brassinosteroid (BR)-regulated plant growth but prevent drought response by modulating gene expression. This Arabidopsis thaliana (Mouse-ear cress) protein is Probable WRKY transcription factor 46 (WRKY46).